A 222-amino-acid polypeptide reads, in one-letter code: MLCRAACSTGRRLGPVAGAAGSRHKHSLPDLPYDYGALEPHINAQIMQLHHSKHHAAYVNNLNATEEKYHEALAKGDVTTQVALQPALKFNGGGHINHTIFWTNLSPKGGGEPKGELLEAIKRDFGSFEKFKEKLTAVSVGVQGSGWGWLGFNKEQGRLQIAACSNQDPLQGTTGLIPLLGIDVWEHAYYLQYKNVRPDYLKAIWNVINWENVTERYTACKK.

Residues 1 to 24 constitute a mitochondrion transit peptide; it reads MLCRAACSTGRRLGPVAGAAGSRH. Position 50 (His50) interacts with Mn(2+). Tyr58 bears the 3'-nitrotyrosine mark. N6-acetyllysine; alternate occurs at positions 68 and 75. Residues Lys68 and Lys75 each carry the N6-succinyllysine; alternate modification. His98 is a Mn(2+) binding site. Residue Lys114 is modified to N6-acetyllysine. 2 positions are modified to N6-acetyllysine; alternate: Lys122 and Lys130. 2 positions are modified to N6-succinyllysine; alternate: Lys122 and Lys130. Mn(2+) contacts are provided by Asp183 and His187. Lys202 bears the N6-acetyllysine mark.

The protein belongs to the iron/manganese superoxide dismutase family. As to quaternary structure, homotetramer. Mn(2+) is required as a cofactor. In terms of processing, nitrated under oxidative stress. Nitration coupled with oxidation inhibits the catalytic activity. Acetylation at Lys-122 decreases enzymatic activity. Deacetylated by SIRT3 upon exposure to ionizing radiations or after long fasting. Post-translationally, polyubiquitinated; leading to proteasomal degradation. Deubiquitinated by USP36 which increases protein stability.

The protein localises to the mitochondrion matrix. The catalysed reaction is 2 superoxide + 2 H(+) = H2O2 + O2. Destroys superoxide anion radicals which are normally produced within the cells and which are toxic to biological systems. This chain is Superoxide dismutase [Mn], mitochondrial (Sod2), found in Mus musculus (Mouse).